We begin with the raw amino-acid sequence, 371 residues long: L-lysine 4-hydroxylase (371 aa).

Fe cation contacts are provided by His-174, Glu-176, and His-310.

This sequence belongs to the clavaminate synthase family. Fe(2+) serves as cofactor.

It catalyses the reaction L-lysine + 2-oxoglutarate + O2 = (4R)-4-hydroxy-L-lysine + succinate + CO2. Alpha-ketoglutarate-dependent dioxygenase that in vitro catalyzes the regio- and stereoselective hydroxylation of L-lysine, leading to (4R)-4-hydroxy-L-lysine. This Niastella koreensis (strain DSM 17620 / KACC 11465 / NBRC 106392 / GR20-10) protein is L-lysine 4-hydroxylase.